The chain runs to 196 residues: Imidazole glycerol phosphate synthase subunit HisH (196 aa).

In terms of domain architecture, Glutamine amidotransferase type-1 spans 2-196 (KVAVIKYNAG…ERIIKNFLEL (195 aa)). Catalysis depends on Cys-77, which acts as the Nucleophile. Active-site residues include His-178 and Glu-180.

As to quaternary structure, heterodimer of HisH and HisF.

Its subcellular location is the cytoplasm. It carries out the reaction 5-[(5-phospho-1-deoxy-D-ribulos-1-ylimino)methylamino]-1-(5-phospho-beta-D-ribosyl)imidazole-4-carboxamide + L-glutamine = D-erythro-1-(imidazol-4-yl)glycerol 3-phosphate + 5-amino-1-(5-phospho-beta-D-ribosyl)imidazole-4-carboxamide + L-glutamate + H(+). The catalysed reaction is L-glutamine + H2O = L-glutamate + NH4(+). It functions in the pathway amino-acid biosynthesis; L-histidine biosynthesis; L-histidine from 5-phospho-alpha-D-ribose 1-diphosphate: step 5/9. In terms of biological role, IGPS catalyzes the conversion of PRFAR and glutamine to IGP, AICAR and glutamate. The HisH subunit catalyzes the hydrolysis of glutamine to glutamate and ammonia as part of the synthesis of IGP and AICAR. The resulting ammonia molecule is channeled to the active site of HisF. The polypeptide is Imidazole glycerol phosphate synthase subunit HisH (Bacteroides fragilis (strain YCH46)).